The primary structure comprises 294 residues: NAD kinase (294 aa).

Asp-74 functions as the Proton acceptor in the catalytic mechanism. Residues 74 to 75 (DG), 148 to 149 (NE), His-159, Arg-176, Asp-178, 189 to 194 (TAYSLS), and Gln-249 each bind NAD(+).

Belongs to the NAD kinase family. The cofactor is a divalent metal cation.

The protein resides in the cytoplasm. It catalyses the reaction NAD(+) + ATP = ADP + NADP(+) + H(+). In terms of biological role, involved in the regulation of the intracellular balance of NAD and NADP, and is a key enzyme in the biosynthesis of NADP. Catalyzes specifically the phosphorylation on 2'-hydroxyl of the adenosine moiety of NAD to yield NADP. The sequence is that of NAD kinase from Vibrio vulnificus (strain YJ016).